A 191-amino-acid chain; its full sequence is Protein GrpE (191 aa).

Residues methionine 1 to serine 19 show a composition bias toward basic and acidic residues. Positions methionine 1 to isoleucine 44 are disordered.

This sequence belongs to the GrpE family. In terms of assembly, homodimer.

It localises to the cytoplasm. In terms of biological role, participates actively in the response to hyperosmotic and heat shock by preventing the aggregation of stress-denatured proteins, in association with DnaK and GrpE. It is the nucleotide exchange factor for DnaK and may function as a thermosensor. Unfolded proteins bind initially to DnaJ; upon interaction with the DnaJ-bound protein, DnaK hydrolyzes its bound ATP, resulting in the formation of a stable complex. GrpE releases ADP from DnaK; ATP binding to DnaK triggers the release of the substrate protein, thus completing the reaction cycle. Several rounds of ATP-dependent interactions between DnaJ, DnaK and GrpE are required for fully efficient folding. The chain is Protein GrpE from Helicobacter pylori (strain G27).